The sequence spans 232 residues: MIKVMVMKIAVIGGTGDQGLGLALRFAVAGEEVIIGSRDAEKASKAASKVLEIAGRDDISVEGATNPDAAASADVVVLTVPLQAQMVTLASIRDQVRDKVLIDATVPIDSCIGGSAVRYIDLWEGSAAERAARFLREQGTRVAAAFNNISASALLEVSEPVDCDCLVASDHRDALEVAAELAEKIDGVRAIECGGLENARIIEKITPLLINLNIRNRVRNAGIRITNLPEQE.

NADP(+)-binding positions include 15 to 18 (TGDQ), 37 to 38 (SR), Lys-42, Val-80, Val-106, and Ala-151.

Belongs to the F420-dependent NADP reductase family. As to quaternary structure, homotetramer.

It carries out the reaction reduced coenzyme F420-(gamma-L-Glu)(n) + NADP(+) = oxidized coenzyme F420-(gamma-L-Glu)(n) + NADPH + 2 H(+). In terms of biological role, catalyzes the reduction of NADP(+) with F420H(2) via hydride transfer, and likely the reverse reaction, i.e. the reduction of F420 with NADPH. Probably functions in the regeneration of NADPH required in biosynthetic reactions. Is specific for reduced F420 as electron donor for the reduction of NADP; neither reduced FAD nor FMN can act as electron donor. The enzyme is also specific for NADP; NAD is not utilized as substrate. The sequence is that of F420-dependent NADP reductase (fno) from Methanothermobacter thermautotrophicus (strain ATCC 29096 / DSM 1053 / JCM 10044 / NBRC 100330 / Delta H) (Methanobacterium thermoautotrophicum).